A 200-amino-acid chain; its full sequence is 3-isopropylmalate dehydratase small subunit (200 aa).

Belongs to the LeuD family. LeuD type 1 subfamily. In terms of assembly, heterodimer of LeuC and LeuD.

The enzyme catalyses (2R,3S)-3-isopropylmalate = (2S)-2-isopropylmalate. It participates in amino-acid biosynthesis; L-leucine biosynthesis; L-leucine from 3-methyl-2-oxobutanoate: step 2/4. Catalyzes the isomerization between 2-isopropylmalate and 3-isopropylmalate, via the formation of 2-isopropylmaleate. The polypeptide is 3-isopropylmalate dehydratase small subunit (Yersinia pestis bv. Antiqua (strain Antiqua)).